The chain runs to 440 residues: MQQLFSQHIARIQQIVQHALELARLDGLWIYAGQAKYHFLDDQTSPFKINPHFNYIFPDPTVEQSWLFLDGKNKPKLYFYAPQDYWHCTPNPPTSAFFADEFEWQMLTDSQQIQQYIINPTHCAFIGEQTELAKSLGFEHINPQKVLNVLHFERSIKSEFEIECIYQAQLTALAGHHAAKEAFFASKSEFEINLAYLQATKQSDNNVPYGNIVAINQHSAILHYTKLDFTPPCERHSFLLDAGTSYLGYASDLTRTYAFEPQSEFAAMIAQMEQFKLDTIADMQVGMNYLSYHTQMHRWISQMLHQFEFVKLPADQIFEEGISRTFFPHGLGHQLGLQVHDVAGFQQNHRGTRKAPPEIYPSLRCTRDLAEGMVLTIEPGFYFIEMLLNQWKNHPLAPFFNWQKIDEFKRYGGIRTEDNIVMRATGAENLTAKAESISSR.

5 residues coordinate Mn(2+): aspartate 241, aspartate 252, histidine 333, glutamate 378, and glutamate 417.

The protein belongs to the peptidase M24B family. Bacterial-type prolidase subfamily. The cofactor is Mn(2+).

It catalyses the reaction Xaa-L-Pro dipeptide + H2O = an L-alpha-amino acid + L-proline. In terms of biological role, splits dipeptides with a prolyl residue in the C-terminal position. The protein is Xaa-Pro dipeptidase of Glaesserella parasuis serovar 5 (strain SH0165) (Haemophilus parasuis).